The sequence spans 197 residues: Holliday junction branch migration complex subunit RuvA (197 aa).

The tract at residues 1-64 (MIGHLEGRLR…EDAIQLYGFR (64 aa)) is domain I. The segment at 65 to 143 (TVAEKDMFLR…VKKGREAEQP (79 aa)) is domain II. Residues 144–145 (AP) are flexible linker. Residues 146–197 (AAESSYGDAYSALVNLGYRPAEAEKALGKAIKSLGADPPVEKLLKETLRLLA) form a domain III region.

The protein belongs to the RuvA family. In terms of assembly, homotetramer. Forms an RuvA(8)-RuvB(12)-Holliday junction (HJ) complex. HJ DNA is sandwiched between 2 RuvA tetramers; dsDNA enters through RuvA and exits via RuvB. An RuvB hexamer assembles on each DNA strand where it exits the tetramer. Each RuvB hexamer is contacted by two RuvA subunits (via domain III) on 2 adjacent RuvB subunits; this complex drives branch migration. In the full resolvosome a probable DNA-RuvA(4)-RuvB(12)-RuvC(2) complex forms which resolves the HJ.

It is found in the cytoplasm. In terms of biological role, the RuvA-RuvB-RuvC complex processes Holliday junction (HJ) DNA during genetic recombination and DNA repair, while the RuvA-RuvB complex plays an important role in the rescue of blocked DNA replication forks via replication fork reversal (RFR). RuvA specifically binds to HJ cruciform DNA, conferring on it an open structure. The RuvB hexamer acts as an ATP-dependent pump, pulling dsDNA into and through the RuvAB complex. HJ branch migration allows RuvC to scan DNA until it finds its consensus sequence, where it cleaves and resolves the cruciform DNA. In Syntrophobacter fumaroxidans (strain DSM 10017 / MPOB), this protein is Holliday junction branch migration complex subunit RuvA.